The sequence spans 1010 residues: Polyhomeotic-like protein 1 (1010 aa).

A compositionally biased stretch (low complexity) spans 1 to 22; sequence METESEQNSSSTNGSSSSGASS. Disordered stretches follow at residues 1–25, 212–243, 259–312, 444–506, 565–588, and 646–678; these read METE…SRPQ, NQQA…LSQT, GQSL…TGVV, QQQG…SKPP, GAVQ…PGAL, and KRKA…SPKV. The segment covering 212–228 has biased composition (polar residues); that stretch reads NQQASAQGPQMPGSTQK. Residues 279–292 are compositionally biased toward gly residues; that stretch reads MGPGGGGQAPGGLG. The segment covering 453–463 has biased composition (pro residues); it reads PQPPQVPPTQQ. Over residues 464 to 480 the composition is skewed to low complexity; that stretch reads VPPSQSQQQAQTLVVQP. Residues 488–500 are compositionally biased toward pro residues; the sequence is TLPPEPTSKPPIP. The segment covering 575–587 has biased composition (low complexity); it reads ASSPPSSQAAPGA. A Phosphoserine modification is found at S651. A Glycyl lysine isopeptide (Lys-Gly) (interchain with G-Cter in SUMO2) cross-link involves residue K769. The disordered stretch occupies residues 772–794; the sequence is QAGLPTGLNESQPSGPLGGDSPS. Residues 797 to 831 form an FCS-type zinc finger; the sequence is LEKKANLLKCEYCGKYAPAEQFRGSKRFCSMTCAK. Positions 806, 809, 825, and 829 each coordinate Zn(2+). The interval 854–928 is disordered; that stretch reads ASYARVRRRG…LGNTITTPST (75 aa). S904 bears the Phosphoserine mark. A Phosphothreonine modification is found at T928. The 65-residue stretch at 946 to 1010 folds into the SAM domain; that stretch reads WSVEEVYEFI…CAKINVLKET (65 aa).

As to quaternary structure, homodimer. Component of a PRC1-like complex. Interacts with the SAM domain of SCMH1 via its SAM domain in vitro. Interacts with RNF2 and CBX7. Interacts with PHC2. Interacts with BMI1. In terms of tissue distribution, highly expressed in testis with lower levels in most other tissues. Expressed in embryonic stem cells.

It localises to the nucleus. Component of a Polycomb group (PcG) multiprotein PRC1-like complex, a complex class required to maintain the transcriptionally repressive state of many genes, including Hox genes, throughout development. PcG PRC1 complex acts via chromatin remodeling and modification of histones; it mediates monoubiquitination of histone H2A 'Lys-119', rendering chromatin heritably changed in its expressibility. Required for proper control of cellular levels of GMNN expression. The sequence is that of Polyhomeotic-like protein 1 from Mus musculus (Mouse).